We begin with the raw amino-acid sequence, 741 residues long: Interleukin-17 receptor D (741 aa).

The first 26 residues, 1 to 26, serve as a signal peptide directing secretion; it reads MAPGRELGAFLLALLAFCGGRRLAEA. At 27–301 the chain is on the extracellular side; sequence AGGPGGRRGA…VHSPWAGPIR (275 aa). Residues Asn-57, Asn-82, Asn-173, Asn-208, and Asn-279 are each glycosylated (N-linked (GlcNAc...) asparagine). The helical transmembrane segment at 302–322 threads the bilayer; it reads AIAITVPLVVISAFATLFTVM. At 323–741 the chain is on the cytoplasmic side; the sequence is CRKKQQENIY…TDELQAIAPL (419 aa). Positions 357-510 constitute an SEFIR domain; the sequence is RPKVFICYSS…LMDNLPQLYS (154 aa). Residues 688 to 703 show a composition bias toward low complexity; sequence TETSSITGSVSSSSGL. The segment at 688–708 is disordered; it reads TETSSITGSVSSSSGLGEEEP.

The protein resides in the membrane. Its function is as follows. Feedback inhibitor of fibroblast growth factor mediated Ras-MAPK signaling and ERK activation. May inhibit FGF-induced FGFR1 tyrosine phosphorylation. Inhibits TGFB-induced epithelial-to-mesenchymal transition in lens epithelial cells. The chain is Interleukin-17 receptor D (IL17RD) from Gallus gallus (Chicken).